A 267-amino-acid chain; its full sequence is MTNICIVGAGGRMGRTLIEAIQQAEGLDLTVATERAGSSLIGADAGELAGVGRLGVAISEDPAAQVAAFDVLIDFTRPEGTLAHLEICRKAGRAMVIGTTGFTEAQKQTIREAAKEIPVVFAPNMSVGVNLCLKLLDLAARVLGDEVDIEVIEAHHRHKVDAPSGTALRMGEVVAEALGRDLAQCAVYGREGHTGERERKTIGFETIRAGDIVGEHTVMFAGIGERVEITHKASSRMTFAKGAVRAAAWLKGRSAGLYDMQDVLDLR.

Residues 8–13 (GAGGRM) and E34 contribute to the NAD(+) site. R35 is an NADP(+) binding site. Residues 98-100 (GTT) and 122-125 (APNM) contribute to the NAD(+) site. H155 functions as the Proton donor/acceptor in the catalytic mechanism. H156 is a binding site for (S)-2,3,4,5-tetrahydrodipicolinate. Residue K159 is the Proton donor of the active site. 165 to 166 (GT) serves as a coordination point for (S)-2,3,4,5-tetrahydrodipicolinate.

Belongs to the DapB family.

The protein resides in the cytoplasm. The enzyme catalyses (S)-2,3,4,5-tetrahydrodipicolinate + NAD(+) + H2O = (2S,4S)-4-hydroxy-2,3,4,5-tetrahydrodipicolinate + NADH + H(+). It carries out the reaction (S)-2,3,4,5-tetrahydrodipicolinate + NADP(+) + H2O = (2S,4S)-4-hydroxy-2,3,4,5-tetrahydrodipicolinate + NADPH + H(+). It functions in the pathway amino-acid biosynthesis; L-lysine biosynthesis via DAP pathway; (S)-tetrahydrodipicolinate from L-aspartate: step 4/4. Its function is as follows. Catalyzes the conversion of 4-hydroxy-tetrahydrodipicolinate (HTPA) to tetrahydrodipicolinate. The sequence is that of 4-hydroxy-tetrahydrodipicolinate reductase from Thioalkalivibrio sulfidiphilus (strain HL-EbGR7).